The following is a 552-amino-acid chain: CTP synthase (552 aa).

Positions 1–270 (MTKYVFVTGG…DRIICEELKL (270 aa)) are amidoligase domain. Ser-13 contacts CTP. Ser-13 provides a ligand contact to UTP. ATP contacts are provided by residues 14–19 (SLGKGI) and Asp-71. Residues Asp-71 and Glu-144 each contribute to the Mg(2+) site. CTP contacts are provided by residues 151–153 (DIE), 191–196 (KTKPTQ), and Lys-227. Residues 191–196 (KTKPTQ) and Lys-227 contribute to the UTP site. The Glutamine amidotransferase type-1 domain maps to 295–547 (TIGMVGKYVD…VEAALANKQA (253 aa)). Gly-356 is a binding site for L-glutamine. Cys-383 acts as the Nucleophile; for glutamine hydrolysis in catalysis. Residues 384-387 (LGMQ), Glu-407, and Arg-473 each bind L-glutamine. Active-site residues include His-520 and Glu-522.

The protein belongs to the CTP synthase family. In terms of assembly, homotetramer.

It carries out the reaction UTP + L-glutamine + ATP + H2O = CTP + L-glutamate + ADP + phosphate + 2 H(+). The enzyme catalyses L-glutamine + H2O = L-glutamate + NH4(+). It catalyses the reaction UTP + NH4(+) + ATP = CTP + ADP + phosphate + 2 H(+). It participates in pyrimidine metabolism; CTP biosynthesis via de novo pathway; CTP from UDP: step 2/2. With respect to regulation, allosterically activated by GTP, when glutamine is the substrate; GTP has no effect on the reaction when ammonia is the substrate. The allosteric effector GTP functions by stabilizing the protein conformation that binds the tetrahedral intermediate(s) formed during glutamine hydrolysis. Inhibited by the product CTP, via allosteric rather than competitive inhibition. Its function is as follows. Catalyzes the ATP-dependent amination of UTP to CTP with either L-glutamine or ammonia as the source of nitrogen. Regulates intracellular CTP levels through interactions with the four ribonucleotide triphosphates. The polypeptide is CTP synthase (Burkholderia cenocepacia (strain HI2424)).